The following is a 413-amino-acid chain: Multifunctional CCA protein (413 aa).

ATP is bound by residues Gly8 and Arg11. The CTP site is built by Gly8 and Arg11. Positions 21 and 23 each coordinate Mg(2+). Arg91, Arg137, and Arg140 together coordinate ATP. Arg91, Arg137, and Arg140 together coordinate CTP. The region spanning Thr228–Trp329 is the HD domain.

It belongs to the tRNA nucleotidyltransferase/poly(A) polymerase family. Bacterial CCA-adding enzyme type 1 subfamily. As to quaternary structure, monomer. Can also form homodimers and oligomers. Mg(2+) serves as cofactor. It depends on Ni(2+) as a cofactor.

It catalyses the reaction a tRNA precursor + 2 CTP + ATP = a tRNA with a 3' CCA end + 3 diphosphate. It carries out the reaction a tRNA with a 3' CCA end + 2 CTP + ATP = a tRNA with a 3' CCACCA end + 3 diphosphate. Its function is as follows. Catalyzes the addition and repair of the essential 3'-terminal CCA sequence in tRNAs without using a nucleic acid template. Adds these three nucleotides in the order of C, C, and A to the tRNA nucleotide-73, using CTP and ATP as substrates and producing inorganic pyrophosphate. tRNA 3'-terminal CCA addition is required both for tRNA processing and repair. Also involved in tRNA surveillance by mediating tandem CCA addition to generate a CCACCA at the 3' terminus of unstable tRNAs. While stable tRNAs receive only 3'-terminal CCA, unstable tRNAs are marked with CCACCA and rapidly degraded. The sequence is that of Multifunctional CCA protein from Klebsiella pneumoniae subsp. pneumoniae (strain ATCC 700721 / MGH 78578).